The primary structure comprises 650 residues: MVLTGPPQRESVSMVKRVSMLDQHKKSSCARVRVAVRLRPYMEEKEEDKVPTACVRGLDSHSLEIVNWRNQLETMQYQFDAFYGDSASQREIYMGSVCHILPHLLIGQNASVFAYGPTGAGKTHTMLGNPDQPGVIPRAVRELLQMTRMAASAPENENWTYTITMSYVEIYQEKVMDLLEPKNKDLPIREDKDHNILIPGVTLKTINSFGDFDEHFIPASQNRTVASTKLNDRSSRSHAVLLIKVQKSQQVAPFRQLIGKLYLIDLAGSEDNRRTGNQGIRLKESGAINSSLFTLSKVVDALNQGLPRIPYRDSKLTRLLQDSLGGSAHSVMITNIAPEQTYYFDTLTALNFAAKSKQIINKPFSRETTQTVAQPAMKRPREEAEATTSSRQRKKSKTDSTESSPNSSMESTGKRKLNLASLDSAVVERLLKLDKILTEKGKKEAQLLSTPKRERMALLKKWEESQMEIERLKEKQKELEQKAMEAEARLEKSNNSDLSDSSVSENTFRAPLRGRNTSTAKVKKVLRVLPMQGNSQLQSTIEEGIPVFEKKKKKQVTCDGHENQPTWEMNMRTDLLESGKERILKLLNTGSVKELKSLQRIGDKKAKLIIGWREVNGLFKNVEELECLEGISAKQVSSFIKANILSSISS.

In terms of domain architecture, Kinesin motor spans 31–359 (RVRVAVRLRP…LNFAAKSKQI (329 aa)). 116–123 (GPTGAGKT) contributes to the ATP binding site. The disordered stretch occupies residues 365 to 416 (SRETTQTVAQPAMKRPREEAEATTSSRQRKKSKTDSTESSPNSSMESTGKRK). Residues 401-411 (TESSPNSSMES) are compositionally biased toward low complexity. Residues 452 to 498 (KRERMALLKKWEESQMEIERLKEKQKELEQKAMEAEARLEKSNNSDL) adopt a coiled-coil conformation. The short motif at 560 to 563 (GHEN) is the Important for regulated proteolytic degradation element.

The protein belongs to the TRAFAC class myosin-kinesin ATPase superfamily. Kinesin family. Post-translationally, ubiquitinated, leading to its subsequent proteasomal degradation.

Its subcellular location is the nucleus. It is found in the cytoplasm. It localises to the cytoskeleton. Its function is as follows. Kinesin family member that is involved in spindle formation and the movements of chromosomes during mitosis and meiosis. Binds to microtubules and to DNA. The protein is Kinesin-like protein KIF22-B (kif22-b) of Xenopus laevis (African clawed frog).